The chain runs to 198 residues: Nucleoside triphosphate pyrophosphatase (198 aa).

Catalysis depends on aspartate 75, which acts as the Proton acceptor.

This sequence belongs to the Maf family. The cofactor is a divalent metal cation.

It is found in the cytoplasm. The catalysed reaction is a ribonucleoside 5'-triphosphate + H2O = a ribonucleoside 5'-phosphate + diphosphate + H(+). The enzyme catalyses a 2'-deoxyribonucleoside 5'-triphosphate + H2O = a 2'-deoxyribonucleoside 5'-phosphate + diphosphate + H(+). In terms of biological role, nucleoside triphosphate pyrophosphatase. May have a dual role in cell division arrest and in preventing the incorporation of modified nucleotides into cellular nucleic acids. This chain is Nucleoside triphosphate pyrophosphatase, found in Hyphomonas neptunium (strain ATCC 15444).